Consider the following 460-residue polypeptide: Ecdysteroid UDP-glucosyltransferase (460 aa).

A signal peptide spans 1-18 (MFISILLLALAVERILCA).

Belongs to the UDP-glycosyltransferase family.

Its function is as follows. Catalyzes the transfer of glucose from UDP-glucose to ecdysteroids which are insect molting hormones. Expression of egt interferes with normal insect development and block molting. The polypeptide is Ecdysteroid UDP-glucosyltransferase (EGT) (Lacanobia oleracea granulosis virus (LoGV)).